The primary structure comprises 355 residues: Phospho-N-acetylmuramoyl-pentapeptide-transferase (355 aa).

10 consecutive transmembrane segments (helical) span residues 3–23 (GVLIAAMVALVVSLLGTPWVI), 56–76 (VIIVAALAGYFLAHLVTGIGF), 80–100 (GLLVLMVMTGLGLVGFLDDYI), 120–140 (AAVAIVFGLLAVRFKNDAGLL), 156–176 (VGIIAFPLLAWIIIAATSNAV), 185–205 (LAAGTSAMVFGAYVIISFWQF), 224–244 (PLDVALVAAAAMGACFGFLWW), 251–271 (IFMGDTGSLALGGAFASIAIV), 276–296 (LLLVVLGGLFVIETLSVMIQV), and 330–350 (FWIVSGLAVAFGLGLFYAEFL).

This sequence belongs to the glycosyltransferase 4 family. MraY subfamily. The cofactor is Mg(2+).

The protein resides in the cell membrane. It catalyses the reaction UDP-N-acetyl-alpha-D-muramoyl-L-alanyl-gamma-D-glutamyl-meso-2,6-diaminopimeloyl-D-alanyl-D-alanine + di-trans,octa-cis-undecaprenyl phosphate = di-trans,octa-cis-undecaprenyl diphospho-N-acetyl-alpha-D-muramoyl-L-alanyl-D-glutamyl-meso-2,6-diaminopimeloyl-D-alanyl-D-alanine + UMP. It participates in cell wall biogenesis; peptidoglycan biosynthesis. Functionally, catalyzes the initial step of the lipid cycle reactions in the biosynthesis of the cell wall peptidoglycan: transfers peptidoglycan precursor phospho-MurNAc-pentapeptide from UDP-MurNAc-pentapeptide onto the lipid carrier undecaprenyl phosphate, yielding undecaprenyl-pyrophosphoryl-MurNAc-pentapeptide, known as lipid I. The polypeptide is Phospho-N-acetylmuramoyl-pentapeptide-transferase (Frankia casuarinae (strain DSM 45818 / CECT 9043 / HFP020203 / CcI3)).